A 446-amino-acid polypeptide reads, in one-letter code: Phosphoglucosamine mutase (446 aa).

Residue Ser-103 is the Phosphoserine intermediate of the active site. Mg(2+)-binding residues include Ser-103, Asp-242, Asp-244, and Asp-246. A Phosphoserine modification is found at Ser-103.

This sequence belongs to the phosphohexose mutase family. Mg(2+) is required as a cofactor. Post-translationally, activated by phosphorylation.

The enzyme catalyses alpha-D-glucosamine 1-phosphate = D-glucosamine 6-phosphate. In terms of biological role, catalyzes the conversion of glucosamine-6-phosphate to glucosamine-1-phosphate. The sequence is that of Phosphoglucosamine mutase from Vibrio atlanticus (strain LGP32) (Vibrio splendidus (strain Mel32)).